Consider the following 540-residue polypeptide: Probable LRR receptor-like serine/threonine-protein kinase RPK1 (540 aa).

The signal sequence occupies residues 1–19 (MKLLGLVFLLFNLFMFSFS). The Extracellular portion of the chain corresponds to 20 to 198 (RKLLTESGGG…PGKSGLYPIE (179 aa)). LRR repeat units lie at residues 118-142 (LSEI…IWGL) and 144-169 (KLEI…VLRK). The chain crosses the membrane as a helical span at residues 199–219 (IASIVSASVIVFVLLVLVILF). The Cytoplasmic portion of the chain corresponds to 220 to 540 (IYTRKWKRNS…LLKRIQPSRL (321 aa)). A phosphothreonine mark is found at Thr-250 and Thr-258. Residues 261–535 (FSNSNCIGHG…KQAVRLLKRI (275 aa)) form the Protein kinase domain. ATP contacts are provided by residues 267–275 (IGHGGFGST) and Lys-289. A phosphotyrosine mark is found at Tyr-334 and Tyr-372. Residue Asp-385 is the Proton acceptor of the active site. Tyr-427 is modified (phosphotyrosine). At Thr-435 the chain carries Phosphothreonine.

Belongs to the protein kinase superfamily. Ser/Thr protein kinase family. In terms of tissue distribution, expressed in roots, stems, leaves, and flowers.

The protein localises to the cell membrane. It catalyses the reaction L-seryl-[protein] + ATP = O-phospho-L-seryl-[protein] + ADP + H(+). The catalysed reaction is L-threonyl-[protein] + ATP = O-phospho-L-threonyl-[protein] + ADP + H(+). In terms of biological role, involved in the main abscisic acid-mediated (ABA) signaling pathway and in early ABA perception. Together with RPK2, required for pattern formation along the radial axis (e.g. the apical embryonic domain cell types that generate cotyledon primordia), and the apical-basal axis (e.g. differentiation of the basal pole during early embryogenesis). The sequence is that of Probable LRR receptor-like serine/threonine-protein kinase RPK1 (RPK1) from Arabidopsis thaliana (Mouse-ear cress).